The sequence spans 117 residues: Large ribosomal subunit protein bL19 (117 aa).

Belongs to the bacterial ribosomal protein bL19 family.

This protein is located at the 30S-50S ribosomal subunit interface and may play a role in the structure and function of the aminoacyl-tRNA binding site. The protein is Large ribosomal subunit protein bL19 of Cutibacterium acnes (strain DSM 16379 / KPA171202) (Propionibacterium acnes).